The primary structure comprises 440 residues: Protein root UVB sensitive 3 (440 aa).

A run of 3 helical transmembrane segments spans residues 109–129 (IGATFQWFLRDFTGMLGGILF), 154–174 (IGMLMDLLSPLFPSAFIVVVC), and 232–252 (FTSGNPMAIWLSFLSLTVFHM).

It belongs to the RUS1 family.

It is found in the membrane. This chain is Protein root UVB sensitive 3, found in Arabidopsis thaliana (Mouse-ear cress).